The primary structure comprises 462 residues: Glycine--tRNA ligase (462 aa).

Arginine 100 and glutamate 174 together coordinate substrate. Residues 206-208, 216-221, 290-291, and 334-337 each bind ATP; these read RNE, FRTREF, EL, and GVDR. 221–225 provides a ligand contact to substrate; the sequence is FEQME. 330 to 334 contacts substrate; it reads EPSVG.

It belongs to the class-II aminoacyl-tRNA synthetase family. Homodimer.

Its subcellular location is the cytoplasm. It catalyses the reaction tRNA(Gly) + glycine + ATP = glycyl-tRNA(Gly) + AMP + diphosphate. Functionally, catalyzes the attachment of glycine to tRNA(Gly). This Alkaliphilus oremlandii (strain OhILAs) (Clostridium oremlandii (strain OhILAs)) protein is Glycine--tRNA ligase.